Consider the following 259-residue polypeptide: uncharacterized protein (259 aa).

The signal sequence occupies residues 1-22; that stretch reads MKHSKKLLLCISFLLITVFISG. A lipid anchor (N-palmitoyl cysteine) is attached at C23. The S-diacylglycerol cysteine moiety is linked to residue C23.

It belongs to the staphylococcal tandem lipoprotein family.

Its subcellular location is the cell membrane. This is an uncharacterized protein from Staphylococcus epidermidis (strain ATCC 35984 / DSM 28319 / BCRC 17069 / CCUG 31568 / BM 3577 / RP62A).